The following is a 92-amino-acid chain: Small ribosomal subunit protein uS19c (92 aa).

The protein belongs to the universal ribosomal protein uS19 family.

The protein resides in the plastid. It is found in the chloroplast. In terms of biological role, protein S19 forms a complex with S13 that binds strongly to the 16S ribosomal RNA. The chain is Small ribosomal subunit protein uS19c (rps19) from Porphyra purpurea (Red seaweed).